The following is a 160-amino-acid chain: Cytochrome b6-f complex subunit 4 (160 aa).

The next 3 membrane-spanning stretches (helical) occupy residues 36 to 56 (LLYI…GLAV), 95 to 115 (LLGV…PFPE), and 131 to 151 (TVFS…ALPI).

Belongs to the cytochrome b family. PetD subfamily. In terms of assembly, the 4 large subunits of the cytochrome b6-f complex are cytochrome b6, subunit IV (17 kDa polypeptide, petD), cytochrome f and the Rieske protein, while the 4 small subunits are petG, petL, petM and petN. The complex functions as a dimer.

Its subcellular location is the plastid. It is found in the chloroplast thylakoid membrane. Its function is as follows. Component of the cytochrome b6-f complex, which mediates electron transfer between photosystem II (PSII) and photosystem I (PSI), cyclic electron flow around PSI, and state transitions. This Huperzia lucidula (Shining clubmoss) protein is Cytochrome b6-f complex subunit 4.